The chain runs to 207 residues: Chaperone protein TorD (207 aa).

This sequence belongs to the TorD/DmsD family. TorD subfamily.

The protein resides in the cytoplasm. In terms of biological role, involved in the biogenesis of TorA. Acts on TorA before the insertion of the molybdenum cofactor and, as a result, probably favors a conformation of the apoenzyme that is competent for acquiring the cofactor. The sequence is that of Chaperone protein TorD from Aggregatibacter aphrophilus (strain NJ8700) (Haemophilus aphrophilus).